Reading from the N-terminus, the 801-residue chain is Phenylalanine--tRNA ligase beta subunit (801 aa).

The tRNA-binding domain maps to 39–154 (LKMPQKVVVG…GHLELGVELG (116 aa)). Residues 398 to 475 (IDEITIKTTF…RIYGIDNVSS (78 aa)) form the B5 domain. Mg(2+) is bound by residues Asp453, Asp459, Glu462, and Glu463. The 93-residue stretch at 708-800 (SKYQKSTRDL…LVREFDAVLR (93 aa)) folds into the FDX-ACB domain.

Belongs to the phenylalanyl-tRNA synthetase beta subunit family. Type 1 subfamily. As to quaternary structure, tetramer of two alpha and two beta subunits. It depends on Mg(2+) as a cofactor.

Its subcellular location is the cytoplasm. The enzyme catalyses tRNA(Phe) + L-phenylalanine + ATP = L-phenylalanyl-tRNA(Phe) + AMP + diphosphate + H(+). The sequence is that of Phenylalanine--tRNA ligase beta subunit from Helicobacter hepaticus (strain ATCC 51449 / 3B1).